Here is a 308-residue protein sequence, read N- to C-terminus: Serpentine receptor class V-1 (308 aa).

Helical transmembrane passes span 15–35 (VSTAISLVCLPINILFVYILF), 46–68 (PFFRLCIHLSIADILMELFSTFF), 88–108 (VVPIAGMQYLGHAQAFGIIFI), 135–155 (LLLIQWITPLFFMAPLFSTDF), 184–204 (AMVDGILINLIVLLLYGAIFI), 222–242 (LALSAFIIFICYLALGVCSLL), and 256–276 (TMWFVVNDVLCNSSALVLLAL).

Belongs to the nematode receptor-like protein srv family.

The protein localises to the membrane. This Caenorhabditis elegans protein is Serpentine receptor class V-1 (srv-1).